We begin with the raw amino-acid sequence, 417 residues long: Serine hydroxymethyltransferase (417 aa).

Residues L121 and 125 to 127 (GHL) each bind (6S)-5,6,7,8-tetrahydrofolate. Residue K229 is modified to N6-(pyridoxal phosphate)lysine. 355–357 (SPF) is a binding site for (6S)-5,6,7,8-tetrahydrofolate.

Belongs to the SHMT family. In terms of assembly, homodimer. It depends on pyridoxal 5'-phosphate as a cofactor.

It is found in the cytoplasm. The enzyme catalyses (6R)-5,10-methylene-5,6,7,8-tetrahydrofolate + glycine + H2O = (6S)-5,6,7,8-tetrahydrofolate + L-serine. It functions in the pathway one-carbon metabolism; tetrahydrofolate interconversion. It participates in amino-acid biosynthesis; glycine biosynthesis; glycine from L-serine: step 1/1. Functionally, catalyzes the reversible interconversion of serine and glycine with tetrahydrofolate (THF) serving as the one-carbon carrier. This reaction serves as the major source of one-carbon groups required for the biosynthesis of purines, thymidylate, methionine, and other important biomolecules. Also exhibits THF-independent aldolase activity toward beta-hydroxyamino acids, producing glycine and aldehydes, via a retro-aldol mechanism. The protein is Serine hydroxymethyltransferase of Proteus mirabilis (strain HI4320).